A 161-amino-acid polypeptide reads, in one-letter code: MAKILKQPDLSDPQLKEKLKKGMGHNYYGEPAWPNDLLYIFPVVIMGTISLVIGLAVLDPAMIGEPSNPFATPLEILPEWYLYPVFQILRTVPSKLLGVLIQTTIPLGLMLIPFIENVNKFQNPFRRPIATSVFLFSVVFTLWLGIGATLPIDKSLTLGLF.

3 helical membrane passes run 37–57, 96–116, and 132–152; these read LLYI…GLAV, LLGV…PFIE, and SVFL…TLPI.

The protein belongs to the cytochrome b family. PetD subfamily. The 4 large subunits of the cytochrome b6-f complex are cytochrome b6, subunit IV (17 kDa polypeptide, PetD), cytochrome f and the Rieske protein, while the 4 small subunits are PetG, PetL, PetM and PetN. The complex functions as a dimer.

It is found in the cellular thylakoid membrane. Its function is as follows. Component of the cytochrome b6-f complex, which mediates electron transfer between photosystem II (PSII) and photosystem I (PSI), cyclic electron flow around PSI, and state transitions. This Acaryochloris marina (strain MBIC 11017) protein is Cytochrome b6-f complex subunit 4.